A 244-amino-acid polypeptide reads, in one-letter code: Phosphoadenosine 5'-phosphosulfate reductase (244 aa).

Residue Cys-239 is the Nucleophile; cysteine thiosulfonate intermediate of the active site.

Belongs to the PAPS reductase family. CysH subfamily.

Its subcellular location is the cytoplasm. It catalyses the reaction [thioredoxin]-disulfide + sulfite + adenosine 3',5'-bisphosphate + 2 H(+) = [thioredoxin]-dithiol + 3'-phosphoadenylyl sulfate. It participates in sulfur metabolism; hydrogen sulfide biosynthesis; sulfite from sulfate: step 3/3. Functionally, catalyzes the formation of sulfite from phosphoadenosine 5'-phosphosulfate (PAPS) using thioredoxin as an electron donor. This is Phosphoadenosine 5'-phosphosulfate reductase from Salmonella paratyphi A (strain AKU_12601).